The following is a 132-amino-acid chain: Large ribosomal subunit protein uL24 (132 aa).

It belongs to the universal ribosomal protein uL24 family. Part of the 50S ribosomal subunit.

In terms of biological role, one of two assembly initiator proteins, it binds directly to the 5'-end of the 23S rRNA, where it nucleates assembly of the 50S subunit. Its function is as follows. One of the proteins that surrounds the polypeptide exit tunnel on the outside of the subunit. The protein is Large ribosomal subunit protein uL24 of Synechococcus sp. (strain JA-3-3Ab) (Cyanobacteria bacterium Yellowstone A-Prime).